The sequence spans 238 residues: Phosphoribosylaminoimidazole-succinocarboxamide synthase (238 aa).

The protein belongs to the SAICAR synthetase family.

It catalyses the reaction 5-amino-1-(5-phospho-D-ribosyl)imidazole-4-carboxylate + L-aspartate + ATP = (2S)-2-[5-amino-1-(5-phospho-beta-D-ribosyl)imidazole-4-carboxamido]succinate + ADP + phosphate + 2 H(+). It participates in purine metabolism; IMP biosynthesis via de novo pathway; 5-amino-1-(5-phospho-D-ribosyl)imidazole-4-carboxamide from 5-amino-1-(5-phospho-D-ribosyl)imidazole-4-carboxylate: step 1/2. This is Phosphoribosylaminoimidazole-succinocarboxamide synthase from Alcanivorax borkumensis (strain ATCC 700651 / DSM 11573 / NCIMB 13689 / SK2).